A 188-amino-acid chain; its full sequence is MFIASAYAQNTETSIEHIKKVAEHANRVFPPFDFVHFSSHFFWLAISFGFFYLFISRVIAPRIGGVIETRRDRIASDLDQAMRMKQEADTVVETYERELAEARLKAHTIAQAAGEELKQKAELERKEIEERLEKKLADAEKQIAKIRDKAMQNVGSIAEEVTLGIVKKLIDVDINKETVRSVIKTANY.

Residues 35 to 55 (VHFSSHFFWLAISFGFFYLFI) traverse the membrane as a helical segment.

This sequence belongs to the ATPase B chain family. F-type ATPases have 2 components, F(1) - the catalytic core - and F(0) - the membrane proton channel. F(1) has five subunits: alpha(3), beta(3), gamma(1), delta(1), epsilon(1). F(0) has three main subunits: a(1), b(2) and c(10-14). The alpha and beta chains form an alternating ring which encloses part of the gamma chain. F(1) is attached to F(0) by a central stalk formed by the gamma and epsilon chains, while a peripheral stalk is formed by the delta and b chains.

The protein localises to the cell inner membrane. F(1)F(0) ATP synthase produces ATP from ADP in the presence of a proton or sodium gradient. F-type ATPases consist of two structural domains, F(1) containing the extramembraneous catalytic core and F(0) containing the membrane proton channel, linked together by a central stalk and a peripheral stalk. During catalysis, ATP synthesis in the catalytic domain of F(1) is coupled via a rotary mechanism of the central stalk subunits to proton translocation. In terms of biological role, component of the F(0) channel, it forms part of the peripheral stalk, linking F(1) to F(0). This chain is ATP synthase subunit b 1, found in Bartonella tribocorum (strain CIP 105476 / IBS 506).